The following is a 285-amino-acid chain: Undecaprenyl-diphosphatase (285 aa).

The next 7 helical transmembrane spans lie at 40–60, 89–109, 137–157, 171–191, 209–229, 241–261, and 265–285; these read GPLI…VYFF, LFWW…AIKL, DLIA…DWLG, GLIV…RSGV, FSFL…VPEI, LIAG…LMNF, and ASML…LAFF.

This sequence belongs to the UppP family.

The protein resides in the cell inner membrane. The enzyme catalyses di-trans,octa-cis-undecaprenyl diphosphate + H2O = di-trans,octa-cis-undecaprenyl phosphate + phosphate + H(+). Catalyzes the dephosphorylation of undecaprenyl diphosphate (UPP). Confers resistance to bacitracin. The protein is Undecaprenyl-diphosphatase of Erythrobacter litoralis (strain HTCC2594).